The chain runs to 260 residues: UPF0246 protein APJL_0596 (260 aa).

The protein belongs to the UPF0246 family.

In Actinobacillus pleuropneumoniae serotype 3 (strain JL03), this protein is UPF0246 protein APJL_0596.